We begin with the raw amino-acid sequence, 79 residues long: Small ribosomal subunit protein bS18 (79 aa).

Belongs to the bacterial ribosomal protein bS18 family. As to quaternary structure, part of the 30S ribosomal subunit. Forms a tight heterodimer with protein bS6.

In terms of biological role, binds as a heterodimer with protein bS6 to the central domain of the 16S rRNA, where it helps stabilize the platform of the 30S subunit. This chain is Small ribosomal subunit protein bS18, found in Streptococcus pyogenes serotype M5 (strain Manfredo).